Here is a 147-residue protein sequence, read N- to C-terminus: 2-amino-4-hydroxy-6-hydroxymethyldihydropteridine pyrophosphokinase (147 aa).

Belongs to the HPPK family.

It catalyses the reaction 6-hydroxymethyl-7,8-dihydropterin + ATP = (7,8-dihydropterin-6-yl)methyl diphosphate + AMP + H(+). It functions in the pathway cofactor biosynthesis; tetrahydrofolate biosynthesis; 2-amino-4-hydroxy-6-hydroxymethyl-7,8-dihydropteridine diphosphate from 7,8-dihydroneopterin triphosphate: step 4/4. Catalyzes the transfer of pyrophosphate from adenosine triphosphate (ATP) to 6-hydroxymethyl-7,8-dihydropterin, an enzymatic step in folate biosynthesis pathway. The polypeptide is 2-amino-4-hydroxy-6-hydroxymethyldihydropteridine pyrophosphokinase (folK) (Porphyromonas gingivalis (strain ATCC 33277 / DSM 20709 / CIP 103683 / JCM 12257 / NCTC 11834 / 2561)).